Here is a 220-residue protein sequence, read N- to C-terminus: ATP-dependent dethiobiotin synthetase BioD (220 aa).

An ATP-binding site is contributed by 12–17 (DVGKTI). A Mg(2+)-binding site is contributed by Thr-16. Lys-37 is a catalytic residue. Residue Thr-41 participates in substrate binding. Residues Asp-49, 107 to 110 (EGAG), 167 to 168 (GS), and 197 to 199 (PAG) contribute to the ATP site. Mg(2+) contacts are provided by Asp-49 and Glu-107.

This sequence belongs to the dethiobiotin synthetase family. In terms of assembly, homodimer. Mg(2+) is required as a cofactor.

The protein resides in the cytoplasm. It catalyses the reaction (7R,8S)-7,8-diammoniononanoate + CO2 + ATP = (4R,5S)-dethiobiotin + ADP + phosphate + 3 H(+). It participates in cofactor biosynthesis; biotin biosynthesis; biotin from 7,8-diaminononanoate: step 1/2. Functionally, catalyzes a mechanistically unusual reaction, the ATP-dependent insertion of CO2 between the N7 and N8 nitrogen atoms of 7,8-diaminopelargonic acid (DAPA, also called 7,8-diammoniononanoate) to form a ureido ring. This Corynebacterium efficiens (strain DSM 44549 / YS-314 / AJ 12310 / JCM 11189 / NBRC 100395) protein is ATP-dependent dethiobiotin synthetase BioD.